The following is a 108-amino-acid chain: Peptidyl-prolyl cis-trans isomerase FKBP1A (108 aa).

A PPIase FKBP-type domain is found at 20-108 (GQTCVVHYTG…VFDVELLKLE (89 aa)). Residue lysine 53 is modified to N6-acetyllysine; alternate. An N6-succinyllysine; alternate modification is found at lysine 53.

This sequence belongs to the FKBP-type PPIase family. FKBP1 subfamily. In terms of assembly, interacts with TGFBR1; prevents TGFBR1 phosphorylation by TGFBR2 and stabilizes it in the inactive conformation. Interacts with ACVR1B and SMAD7. Identified in a complex composed of RYR1, PDE4D, PKA, FKBP1A and protein phosphatase 1 (PP1). Interacts directly with RYR2 and RYR3. Interacts with GLMN; rapamycin and FK506 abolish the interaction with GLMN in a dose dependent manner. Interacts directly with RYR1.

It localises to the cytoplasm. It is found in the cytosol. The protein localises to the sarcoplasmic reticulum membrane. The catalysed reaction is [protein]-peptidylproline (omega=180) = [protein]-peptidylproline (omega=0). Inhibited by both FK506 and rapamycin. In terms of biological role, keeps in an inactive conformation TGFBR1, the TGF-beta type I serine/threonine kinase receptor, preventing TGF-beta receptor activation in absence of ligand. Recruits SMAD7 to ACVR1B which prevents the association of SMAD2 and SMAD3 with the activin receptor complex, thereby blocking the activin signal. May modulate the RYR1 calcium channel activity. PPIases accelerate the folding of proteins. It catalyzes the cis-trans isomerization of proline imidic peptide bonds in oligopeptides. In Homo sapiens (Human), this protein is Peptidyl-prolyl cis-trans isomerase FKBP1A (FKBP1A).